A 343-amino-acid polypeptide reads, in one-letter code: Ribosome production factor 1 (343 aa).

Composition is skewed to basic and acidic residues over residues 1–10 (MAEKKGPEAK) and 82–91 (EREALGDKAP). 2 disordered regions span residues 1-51 (MAEK…LSEI) and 77-97 (KKRK…PVPK). Positions 136-319 (PKILITTSDR…LRSLQKGTFD (184 aa)) constitute a Brix domain. Residues 297-314 (VGIQELGPRFTLKLRSLQ) are RNA-binding.

It localises to the nucleus. It is found in the nucleolus. May be required for ribosome biogenesis. This Xenopus laevis (African clawed frog) protein is Ribosome production factor 1 (rpf1).